Here is a 482-residue protein sequence, read N- to C-terminus: NAD(+) hydrolase ThsA (482 aa).

A Deacetylase sirtuin-type domain is found at 3–281; that stretch reads EHEQKIMIDR…EEITKRFRCK (279 aa). 2 residues coordinate NAD(+): Asp-112 and His-150. Residue His-150 is the Proton acceptor of the active site. The segment at 282–482 is SLOG (STALD) domain; the sequence is NVFLSGSAHE…SKIHDVIKLI (201 aa). Residues Gly-287, Ser-288, Leu-324, Phe-355, Arg-373, Lys-390, Gly-407, and Glu-411 each coordinate 3'cADPR.

The protein belongs to the soluble Thoeris ThsA family. As to quaternary structure, homotetramer in solution.

The catalysed reaction is NAD(+) + H2O = ADP-D-ribose + nicotinamide + H(+). In vivo probably activated by a cyclic ADP-D-ribose generated by ThsB (might be 3'cADPR). Functionally, NAD(+) hydrolyzing component (NADase) of the Thoeris antiviral defense system, composed of ThsA and ThsB (maybe J591_1492). As purified, has NADase activity that is not activated by any tested cADPR isomers; binds 3'cADPR better than 2'cADPR. It was suggested the purified protein is already in a fully active state. Upon activation binds and hydrolyzes NAD(+), leading to cell death and inhibition of phage replication. The polypeptide is NAD(+) hydrolase ThsA (Acinetobacter baumannii (strain 532279)).